The following is a 124-amino-acid chain: Large ribosomal subunit protein uL22 (124 aa).

It belongs to the universal ribosomal protein uL22 family. As to quaternary structure, part of the 50S ribosomal subunit.

In terms of biological role, this protein binds specifically to 23S rRNA; its binding is stimulated by other ribosomal proteins, e.g. L4, L17, and L20. It is important during the early stages of 50S assembly. It makes multiple contacts with different domains of the 23S rRNA in the assembled 50S subunit and ribosome. Functionally, the globular domain of the protein is located near the polypeptide exit tunnel on the outside of the subunit, while an extended beta-hairpin is found that lines the wall of the exit tunnel in the center of the 70S ribosome. In Synechococcus sp. (strain JA-2-3B'a(2-13)) (Cyanobacteria bacterium Yellowstone B-Prime), this protein is Large ribosomal subunit protein uL22.